The following is a 328-amino-acid chain: tRNA uridine(34) hydroxylase (328 aa).

In terms of domain architecture, Rhodanese spans 130 to 224 (LDKDTVVLDT…YGKDPEVQGE (95 aa)). Cys184 serves as the catalytic Cysteine persulfide intermediate.

It belongs to the TrhO family.

The catalysed reaction is uridine(34) in tRNA + AH2 + O2 = 5-hydroxyuridine(34) in tRNA + A + H2O. In terms of biological role, catalyzes oxygen-dependent 5-hydroxyuridine (ho5U) modification at position 34 in tRNAs. This is tRNA uridine(34) hydroxylase from Streptococcus pneumoniae (strain Hungary19A-6).